The following is a 473-amino-acid chain: Serine palmitoyltransferase 1 (473 aa).

The Lumenal portion of the chain corresponds to 1-15; that stretch reads MATVAEQWVLVEMVQ. The interval 1–66 is interaction with SPTLC2; it reads MATVAEQWVL…KEELIEEWQP (66 aa). Residues 16–36 traverse the membrane as a helical segment; sequence ALYEAPAYHLILEGILILWII. The Cytoplasmic portion of the chain corresponds to 37-473; that stretch reads RLLFSKTYKL…ISEVAQTVLL (437 aa). Position 164 is a phosphotyrosine; by ABL (Y164).

This sequence belongs to the class-II pyridoxal-phosphate-dependent aminotransferase family. As to quaternary structure, component of the serine palmitoyltransferase (SPT) complex, which is also composed of SPTLC2 or SPTLC3 and SPTSSA or SPTSSB. The heterodimer with SPTLC2 or SPTLC3 forms the catalytic core of the enzyme, while SPTSSA or SPTSSB subunits determine substrate specificity. SPT also interacts with ORMDL proteins, especially ORMDL3, which negatively regulate SPT activity in the presence of ceramides. Forms dimers of heterodimers with SPTLC2. Interacts with RTN4. Pyridoxal 5'-phosphate is required as a cofactor. Post-translationally, phosphorylation at Tyr-164 inhibits activity and promotes cell survival.

The protein resides in the endoplasmic reticulum membrane. It carries out the reaction L-serine + hexadecanoyl-CoA + H(+) = 3-oxosphinganine + CO2 + CoA. It catalyses the reaction octadecanoyl-CoA + L-serine + H(+) = 3-oxoeicosasphinganine + CO2 + CoA. The catalysed reaction is tetradecanoyl-CoA + L-serine + H(+) = 3-oxohexadecasphinganine + CO2 + CoA. The enzyme catalyses dodecanoyl-CoA + L-serine + H(+) = 3-oxotetradecasphinganine + CO2 + CoA. It functions in the pathway lipid metabolism; sphingolipid metabolism. Its activity is regulated as follows. SPT complex catalytic activity is negatively regulated by ORMDL proteins, including ORMDL3, in the presence of ceramides. This mechanism allows to maintain ceramide levels at sufficient concentrations for the production of complex sphingolipids, but which prevents the accumulation of ceramides to levels that trigger apoptosis. In terms of biological role, component of the serine palmitoyltransferase multisubunit enzyme (SPT) that catalyzes the initial and rate-limiting step in sphingolipid biosynthesis by condensing L-serine and activated acyl-CoA (most commonly palmitoyl-CoA) to form long-chain bases. The SPT complex is also composed of SPTLC2 or SPTLC3 and SPTSSA or SPTSSB. Within this complex, the heterodimer with SPTLC2 or SPTLC3 forms the catalytic core. The composition of the serine palmitoyltransferase (SPT) complex determines the substrate preference. The SPTLC1-SPTLC2-SPTSSA complex shows a strong preference for C16-CoA substrate, while the SPTLC1-SPTLC3-SPTSSA isozyme uses both C14-CoA and C16-CoA as substrates, with a slight preference for C14-CoA. The SPTLC1-SPTLC2-SPTSSB complex shows a strong preference for C18-CoA substrate, while the SPTLC1-SPTLC3-SPTSSB isozyme displays an ability to use a broader range of acyl-CoAs, without apparent preference. Required for adipocyte cell viability and metabolic homeostasis. This is Serine palmitoyltransferase 1 (SPTLC1) from Bos taurus (Bovine).